Reading from the N-terminus, the 216-residue chain is Uracil-DNA glycosylase (216 aa).

The active-site Proton acceptor is the aspartate 60.

It belongs to the uracil-DNA glycosylase (UDG) superfamily. UNG family.

The protein resides in the cytoplasm. The catalysed reaction is Hydrolyzes single-stranded DNA or mismatched double-stranded DNA and polynucleotides, releasing free uracil.. In terms of biological role, excises uracil residues from the DNA which can arise as a result of misincorporation of dUMP residues by DNA polymerase or due to deamination of cytosine. This chain is Uracil-DNA glycosylase, found in Psychromonas ingrahamii (strain DSM 17664 / CCUG 51855 / 37).